Here is a 1381-residue protein sequence, read N- to C-terminus: Non-structural polyprotein 1AB (1381 aa).

The stretch at V121–E160 forms a coiled coil. 5 helical membrane passes run F169 to V189, L249 to T269, L279 to A299, A324 to M344, and F365 to I385. Residues H477, D506, and S569 each act as charge relay system; for serine protease activity in the active site. Y694 carries the O-(5'-phospho-RNA)-tyrosine modification. Residues T703–D732 adopt a coiled-coil conformation. Positions M856–E879 are disordered. The region spanning S1122–V1254 is the RdRp catalytic domain.

Belongs to the astroviridae polyprotein 1AB family. Monomer. Cleaved by the viral and host proteases. The protease is probably autocatalytically cleaved.

It localises to the host membrane. It carries out the reaction RNA(n) + a ribonucleoside 5'-triphosphate = RNA(n+1) + diphosphate. In terms of biological role, responsible for the cleavage of the polyprotein into functional products. Its function is as follows. Protein covalently attached to the 5' extremity of the genomic and subgenomic RNAs. It may serve as a primer for the replicase. The polypeptide is Non-structural polyprotein 1AB (ORF1) (Neovison vison (American mink)).